The primary structure comprises 256 residues: Hydroxyacylglutathione hydrolase (256 aa).

7 residues coordinate Zn(2+): histidine 57, histidine 59, aspartate 61, histidine 62, histidine 115, aspartate 134, and histidine 172.

Belongs to the metallo-beta-lactamase superfamily. Glyoxalase II family. As to quaternary structure, monomer. The cofactor is Zn(2+).

It catalyses the reaction an S-(2-hydroxyacyl)glutathione + H2O = a 2-hydroxy carboxylate + glutathione + H(+). It functions in the pathway secondary metabolite metabolism; methylglyoxal degradation; (R)-lactate from methylglyoxal: step 2/2. Functionally, thiolesterase that catalyzes the hydrolysis of S-D-lactoyl-glutathione to form glutathione and D-lactic acid. The sequence is that of Hydroxyacylglutathione hydrolase from Rhodospirillum rubrum (strain ATCC 11170 / ATH 1.1.1 / DSM 467 / LMG 4362 / NCIMB 8255 / S1).